Here is a 105-residue protein sequence, read N- to C-terminus: Replication restart protein PriB (105 aa).

Positions 1 to 102 constitute an SSB domain; that stretch reads MTTNRLVLSG…LHAEQIEFID (102 aa).

It belongs to the PriB family. As to quaternary structure, homodimer. Interacts with PriA and DnaT. Component of the replication restart primosome. Primosome assembly occurs via a 'hand-off' mechanism. PriA binds to replication forks, subsequently PriB then DnaT bind; DnaT then displaces ssDNA to generate the helicase loading substrate.

Its function is as follows. Involved in the restart of stalled replication forks, which reloads the replicative helicase on sites other than the origin of replication; the PriA-PriB pathway is the major replication restart pathway. During primosome assembly it facilitates complex formation between PriA and DnaT on DNA; stabilizes PriA on DNA. Stimulates the DNA unwinding activity of PriA helicase. The sequence is that of Replication restart protein PriB from Yersinia pseudotuberculosis serotype O:1b (strain IP 31758).